The primary structure comprises 316 residues: tRNA dimethylallyltransferase (316 aa).

17–24 (GPTASGKT) provides a ligand contact to ATP. 19 to 24 (TASGKT) lines the substrate pocket. Interaction with substrate tRNA stretches follow at residues 42-45 (DSAL), 166-170 (QRLSR), and 247-252 (RCVGYR).

Belongs to the IPP transferase family. Monomer. Requires Mg(2+) as cofactor.

The catalysed reaction is adenosine(37) in tRNA + dimethylallyl diphosphate = N(6)-dimethylallyladenosine(37) in tRNA + diphosphate. Its function is as follows. Catalyzes the transfer of a dimethylallyl group onto the adenine at position 37 in tRNAs that read codons beginning with uridine, leading to the formation of N6-(dimethylallyl)adenosine (i(6)A). This chain is tRNA dimethylallyltransferase, found in Salmonella paratyphi A (strain ATCC 9150 / SARB42).